Consider the following 387-residue polypeptide: 3-ketoacyl-CoA thiolase (387 aa).

Cys91 (acyl-thioester intermediate) is an active-site residue. Catalysis depends on proton acceptor residues His343 and Cys373.

This sequence belongs to the thiolase-like superfamily. Thiolase family. In terms of assembly, heterotetramer of two alpha chains (FadB) and two beta chains (FadA).

It is found in the cytoplasm. The enzyme catalyses an acyl-CoA + acetyl-CoA = a 3-oxoacyl-CoA + CoA. It functions in the pathway lipid metabolism; fatty acid beta-oxidation. Catalyzes the final step of fatty acid oxidation in which acetyl-CoA is released and the CoA ester of a fatty acid two carbons shorter is formed. This is 3-ketoacyl-CoA thiolase from Shewanella baltica (strain OS185).